An 813-amino-acid chain; its full sequence is Leucine--tRNA ligase (813 aa).

The 'HIGH' region motif lies at 41 to 51 (PYPSGTLHMGH). Positions 575–579 (KMSKS) match the 'KMSKS' region motif. Residue Lys-578 participates in ATP binding.

Belongs to the class-I aminoacyl-tRNA synthetase family.

It localises to the cytoplasm. It catalyses the reaction tRNA(Leu) + L-leucine + ATP = L-leucyl-tRNA(Leu) + AMP + diphosphate. The chain is Leucine--tRNA ligase from Francisella tularensis subsp. holarctica (strain FTNF002-00 / FTA).